The sequence spans 387 residues: MTVSELNEQAKALLETHFSFVEVTGEISRLIRHSSGHWYFSLKDEKSVISSAMYKFSNQQVKFEVKDGMQVTIYGKLTIYPPSGSYQLLANKMLPVGIGELELAFNQLKSKLENEGLFDIKFKKPLPKFPKKIAIVTSLTSAAYQDMLKVINSRYKLCEFIAFNTLVQGEMAAANIIQMLQKADKMGFDAIVLARGGGSKEDLWCFNDENLARVIFTLKTPIVSAVGHEIDYCISDFVSDHRSLTPTAAMVDLLPDANTILQSLDIAFDKFESFIDGKFQNSFNILNLINQSLKNQAISQKIEKANLTLENKKANLENLITSKINNLAHKIKEFELVFDRQEQFFKATKNMVQIEKNGKIMPLHELQIGDEISIYSQITKKNAIIKS.

Belongs to the XseA family. Heterooligomer composed of large and small subunits.

The protein resides in the cytoplasm. It carries out the reaction Exonucleolytic cleavage in either 5'- to 3'- or 3'- to 5'-direction to yield nucleoside 5'-phosphates.. Functionally, bidirectionally degrades single-stranded DNA into large acid-insoluble oligonucleotides, which are then degraded further into small acid-soluble oligonucleotides. The protein is Exodeoxyribonuclease 7 large subunit of Campylobacter fetus subsp. fetus (strain 82-40).